A 352-amino-acid chain; its full sequence is tRNA uridine(34) hydroxylase (352 aa).

Residues 144–238 (SDPDVILIDT…YLEEVPASDS (95 aa)) form the Rhodanese domain. The Cysteine persulfide intermediate role is filled by C198.

It belongs to the TrhO family.

It catalyses the reaction uridine(34) in tRNA + AH2 + O2 = 5-hydroxyuridine(34) in tRNA + A + H2O. In terms of biological role, catalyzes oxygen-dependent 5-hydroxyuridine (ho5U) modification at position 34 in tRNAs. This chain is tRNA uridine(34) hydroxylase, found in Psychrobacter arcticus (strain DSM 17307 / VKM B-2377 / 273-4).